Reading from the N-terminus, the 103-residue chain is Large ribosomal subunit protein bL21 (103 aa).

The protein belongs to the bacterial ribosomal protein bL21 family. In terms of assembly, part of the 50S ribosomal subunit. Contacts protein L20.

In terms of biological role, this protein binds to 23S rRNA in the presence of protein L20. The polypeptide is Large ribosomal subunit protein bL21 (Ralstonia pickettii (strain 12J)).